The sequence spans 81 residues: Protein RADIALIS-like 3 (81 aa).

Residues 7–62 form the SANT domain; sequence SSSASWTRKENKLFERALATYDQDTPDRWHNVARAVGGKSAEEVRRHYELLIRDVN.

Expressed just outside the vascular bundles in the rosette stem and the leaf traces. Not detected in floral primordia.

Its subcellular location is the nucleus. Functionally, probable transcription factor. In Arabidopsis thaliana (Mouse-ear cress), this protein is Protein RADIALIS-like 3 (RL3).